We begin with the raw amino-acid sequence, 258 residues long: Snake venom serine protease catroxase-2 (258 aa).

Residues 1 to 18 form the signal peptide; the sequence is MVLIRVLANLLILQLSYA. A propeptide spanning residues 19–24 is cleaved from the precursor; that stretch reads QKSSEL. The Peptidase S1 domain occupies 25–249; it reads VVGGDECNIN…YNDWIQSIIA (225 aa). Cystine bridges form between C31/C163, C50/C66, C98/C256, C142/C210, C174/C189, and C200/C225. N44 is a glycosylation site (N-linked (GlcNAc...) asparagine). Active-site charge relay system residues include H65 and D110. S204 (charge relay system) is an active-site residue.

The protein belongs to the peptidase S1 family. Snake venom subfamily. As to quaternary structure, monomer. As to expression, expressed by the venom gland.

The protein localises to the secreted. In terms of biological role, snake venom serine protease that may act in the hemostasis system of the prey. This is Snake venom serine protease catroxase-2 from Crotalus atrox (Western diamondback rattlesnake).